We begin with the raw amino-acid sequence, 288 residues long: Movement protein (288 aa).

This sequence belongs to the cucumovirus movement protein family.

The protein localises to the host cell junction. The protein resides in the host plasmodesma. Its function is as follows. Transports viral genome to neighboring plant cells directly through plasmosdesmata, without any budding. The movement protein allows efficient cell to cell propagation, by bypassing the host cell wall barrier. Acts by forming a tubular structure at the host plasmodesmata, enlarging it enough to allow free passage of virion capsids. The chain is Movement protein from Apium graveolens (Celery).